Here is a 204-residue protein sequence, read N- to C-terminus: Putative peroxiredoxin ycf42 (204 aa).

One can recognise a Thioredoxin domain in the interval 5 to 163; that stretch reads PKIGKTPPNF…LLRILESIQY (159 aa).

It belongs to the peroxiredoxin family. AhpC/Prx1 subfamily.

It localises to the plastid. The protein localises to the chloroplast. It catalyses the reaction a hydroperoxide + [protein]-dithiol = [protein]-disulfide + an alcohol + H2O. The chain is Putative peroxiredoxin ycf42 (ycf42) from Trieres chinensis (Marine centric diatom).